Consider the following 671-residue polypeptide: Oviduct-specific glycoprotein (671 aa).

A signal peptide spans 1-21; it reads MGRLLLWVGLVLLMKPNDGTA. The GH18 domain maps to 22–385; that stretch reads YKLVCYFTNW…HILNELLVRA (364 aa). Cysteines 26 and 51 form a disulfide. Chitin is bound by residues 71-72, 98-101, tyrosine 142, 211-214, and tryptophan 355; these read LQ, GGWN, and LSYD. The N-linked (GlcNAc...) asparagine glycan is linked to asparagine 402. Repeat copies occupy residues 490–504, 505–519, 520–534, 535–549, 550–564, 565–579, 580–594, and 595–609. The 8 X 15 AA tandem repeats stretch occupies residues 490 to 609; that stretch reads TGMTVTVQTQ…GSQSVTPPGM (120 aa). Residues asparagine 511, asparagine 526, asparagine 541, asparagine 556, asparagine 571, and asparagine 586 are each glycosylated (N-linked (GlcNAc...) asparagine).

This sequence belongs to the glycosyl hydrolase 18 family. Post-translationally, highly O-glycosylated and also N-glycosylated. In terms of tissue distribution, oviduct.

It localises to the cytoplasmic vesicle. Its subcellular location is the secretory vesicle. In terms of biological role, binds to oocyte zona pellucida in vivo. May play a role in the fertilization process and/or early embryonic development. Might act as a protective secretion influencing the first steps of the reproductive process necessary for the normal triggering of fertilization and early embryonic development. The polypeptide is Oviduct-specific glycoprotein (OVGP1) (Mesocricetus auratus (Golden hamster)).